Consider the following 549-residue polypeptide: Hydroxylamine reductase (549 aa).

The [4Fe-4S] cluster site is built by Cys-3, Cys-6, Cys-15, and Cys-21. The hybrid [4Fe-2O-2S] cluster site is built by His-248, Glu-272, Cys-316, Cys-403, Cys-431, Cys-456, Glu-490, and Lys-492. Position 403 is a cysteine persulfide (Cys-403).

It belongs to the HCP family. [4Fe-4S] cluster is required as a cofactor. Requires hybrid [4Fe-2O-2S] cluster as cofactor.

The protein resides in the cytoplasm. The enzyme catalyses A + NH4(+) + H2O = hydroxylamine + AH2 + H(+). Its function is as follows. Catalyzes the reduction of hydroxylamine to form NH(3) and H(2)O. The sequence is that of Hydroxylamine reductase from Rhodospirillum rubrum (strain ATCC 11170 / ATH 1.1.1 / DSM 467 / LMG 4362 / NCIMB 8255 / S1).